A 207-amino-acid chain; its full sequence is Probable GTP-binding protein EngB (207 aa).

The 172-residue stretch at 22–193 (RVPEIVFAGR…LAHFDHYLSG (172 aa)) folds into the EngB-type G domain. Residues 30-37 (GRSNVGKS), 57-61 (GKTRL), 75-78 (DIPG), 142-145 (TKDD), and 172-174 (YSS) contribute to the GTP site. The Mg(2+) site is built by serine 37 and threonine 59.

It belongs to the TRAFAC class TrmE-Era-EngA-EngB-Septin-like GTPase superfamily. EngB GTPase family. The cofactor is Mg(2+).

Necessary for normal cell division and for the maintenance of normal septation. The protein is Probable GTP-binding protein EngB of Chlorobium luteolum (strain DSM 273 / BCRC 81028 / 2530) (Pelodictyon luteolum).